Here is a 517-residue protein sequence, read N- to C-terminus: Serine O-succinyltransferase (517 aa).

The transit peptide at 1–46 (MSPLNGVARSLPRPFQAVARRPFRVAQPAVACPSNRRSFNHSRSLR) directs the protein to the mitochondrion. The tract at residues 34 to 66 (SNRRSFNHSRSLRSTGSQSPAPSPRDSSNPALS) is disordered. Polar residues predominate over residues 45 to 64 (LRSTGSQSPAPSPRDSSNPA). The 253-residue stretch at 134–386 (NVILLHTGLS…LTQQLATKKQ (253 aa)) folds into the AB hydrolase-1 domain. Residues 141–144 (GLSA) are important for substrate specificity. The active-site Nucleophile is S238. Residue R307 coordinates substrate. Residues 413–436 (QPYQEQPSASTSAEQSASASETGS) form a disordered region. Low complexity predominate over residues 416–436 (QEQPSASTSAEQSASASETGS). Catalysis depends on residues D461 and H498. D499 contacts substrate.

This sequence belongs to the AB hydrolase superfamily. MetX family.

The protein resides in the mitochondrion. The catalysed reaction is succinyl-CoA + L-serine = O-succinyl-L-serine + CoA. The protein operates within amino-acid biosynthesis; L-cysteine biosynthesis; L-cysteine from L-serine: step 1/2. Its function is as follows. Transfers a succinyl group from succinyl-CoA to L-serine, forming succinyl-L-serine. Also has weak serine acetyl transferase activity and homoserine succinyl transferase activity. The chain is Serine O-succinyltransferase from Emericella nidulans (Aspergillus nidulans).